Consider the following 482-residue polypeptide: tRNA sulfurtransferase (482 aa).

One can recognise a THUMP domain in the interval 61-165; sequence LAIRDALTRI…DDRLLLIKGR (105 aa). Residues 183–184, Lys265, Gly287, and Gln296 each bind ATP; that span reads LI. A disulfide bond links Cys344 and Cys456. Residues 404-482 form the Rhodanese domain; it reads FGPNDVILDI…GFNNVKVYRP (79 aa). The Cysteine persulfide intermediate role is filled by Cys456.

The protein belongs to the ThiI family.

The protein resides in the cytoplasm. The enzyme catalyses [ThiI sulfur-carrier protein]-S-sulfanyl-L-cysteine + a uridine in tRNA + 2 reduced [2Fe-2S]-[ferredoxin] + ATP + H(+) = [ThiI sulfur-carrier protein]-L-cysteine + a 4-thiouridine in tRNA + 2 oxidized [2Fe-2S]-[ferredoxin] + AMP + diphosphate. The catalysed reaction is [ThiS sulfur-carrier protein]-C-terminal Gly-Gly-AMP + S-sulfanyl-L-cysteinyl-[cysteine desulfurase] + AH2 = [ThiS sulfur-carrier protein]-C-terminal-Gly-aminoethanethioate + L-cysteinyl-[cysteine desulfurase] + A + AMP + 2 H(+). The protein operates within cofactor biosynthesis; thiamine diphosphate biosynthesis. Catalyzes the ATP-dependent transfer of a sulfur to tRNA to produce 4-thiouridine in position 8 of tRNAs, which functions as a near-UV photosensor. Also catalyzes the transfer of sulfur to the sulfur carrier protein ThiS, forming ThiS-thiocarboxylate. This is a step in the synthesis of thiazole, in the thiamine biosynthesis pathway. The sulfur is donated as persulfide by IscS. In Escherichia coli O9:H4 (strain HS), this protein is tRNA sulfurtransferase.